The chain runs to 265 residues: tRNA (guanine-N(1)-)-methyltransferase (265 aa).

Residues glycine 119 and valine 139 to leucine 144 contribute to the S-adenosyl-L-methionine site.

It belongs to the RNA methyltransferase TrmD family. As to quaternary structure, homodimer.

The protein resides in the cytoplasm. The enzyme catalyses guanosine(37) in tRNA + S-adenosyl-L-methionine = N(1)-methylguanosine(37) in tRNA + S-adenosyl-L-homocysteine + H(+). Its function is as follows. Specifically methylates guanosine-37 in various tRNAs. The protein is tRNA (guanine-N(1)-)-methyltransferase of Pseudoalteromonas atlantica (strain T6c / ATCC BAA-1087).